The primary structure comprises 308 residues: Ribosomal RNA small subunit methyltransferase H (308 aa).

S-adenosyl-L-methionine-binding positions include 38-40 (GGH), Asp58, Phe82, Asp99, and Gln106.

This sequence belongs to the methyltransferase superfamily. RsmH family.

It localises to the cytoplasm. The enzyme catalyses cytidine(1402) in 16S rRNA + S-adenosyl-L-methionine = N(4)-methylcytidine(1402) in 16S rRNA + S-adenosyl-L-homocysteine + H(+). In terms of biological role, specifically methylates the N4 position of cytidine in position 1402 (C1402) of 16S rRNA. This Acidovorax sp. (strain JS42) protein is Ribosomal RNA small subunit methyltransferase H.